The following is a 344-amino-acid chain: 2-methyl-6-phytyl-1,4-hydroquinone methyltransferase, chloroplastic (344 aa).

Residues 1-62 constitute a chloroplast transit peptide; that stretch reads MACSMLNGVD…LTTVTKCTLS (62 aa). Residues 63-313 are Chloroplast intermembrane-facing; it reads ASERPASQPR…PVHPLVFLYR (251 aa). The tract at residues 121–130 is SAM motif I; that stretch reads VVDVGGGTGF. The SAM motif II stretch occupies residues 166–179; it reads CRIIEGDAEDLPFP. Residues 207–220 form an SAM motif III region; it reads RVLKLGGKACLIGP. The chain crosses the membrane as a helical span at residues 314–334; the sequence is FLLGALASTYYVLVPIYMWIK. Over 335-344 the chain is Stromal; the sequence is DKIFPKGMPL.

This sequence belongs to the class I-like SAM-binding methyltransferase superfamily. MPBQ/MBSQ MT family.

It localises to the plastid. The protein localises to the chloroplast inner membrane. The enzyme catalyses 2-methyl-6-phytyl-1,4-benzene-1,4-diol + S-adenosyl-L-methionine = 2,3-dimethyl-6-phytylbenzene-1,4-diol + S-adenosyl-L-homocysteine + H(+). The catalysed reaction is 2-methyl-6-(all-trans-nonaprenyl)benzene-1,4-diol + S-adenosyl-L-methionine = plastoquinol-9 + S-adenosyl-L-homocysteine + H(+). It carries out the reaction 6-geranylgeranyl-2-methylbenzene-1,4-diol + S-adenosyl-L-methionine = 6-geranylgeranyl-2,3-dimethylbenzene-1,4-diol + S-adenosyl-L-homocysteine + H(+). Its pathway is cofactor biosynthesis; tocopherol biosynthesis. In terms of biological role, involved in a key methylation step in both tocopherols (vitamin E) and plastoquinone synthesis. Catalyzes the conversion of 2-methyl-6-phytyl-1,4-hydroquinone (MPBQ) to 2,3-dimethyl-6-phytyl-1,4-hydroquinone (DMPQ, a substrate for tocopherol cyclase), and 2-methyl-6-solanyl-1,4-benzoquinone (MSBQ) to plastoquinone. The polypeptide is 2-methyl-6-phytyl-1,4-hydroquinone methyltransferase, chloroplastic (Spinacia oleracea (Spinach)).